The primary structure comprises 686 residues: MSGSKLSTPNNSGGGQGNLSQEQIITGTREVIKGLEQLKNEHNDILNSLYQSLKMLKKDTPGDSNLVEEKTDIIEKSLESLELGLGEAKVMMALGHHLNMVEAEKQKLRAQVRRLVQENTWLRDELAATQQKLQTSEQNLADLEVKYKHLEYMNSIKKYDEDRTPDEEASSSDPLDLGFPEDDDGGQADESYPQPQTGSGSVSAAAGGYEIPARLRTLHNLVIQYASQSRYEVAVPLCKQALEDLEKTSGHDHPDVATMLNILALVYRDQNKYKEAGNLLHDALAIREKTLGPDHPAVAATLNNLAVLYGKRGKYKEAEPLCKRALEIREKVLGKDHPDVAKQLNNLALLCQNQGKYEEVEWYYQRALEIYEKKLGPDDPNVAKTKNNLAAAYLKQGKYKAAETLYKQVLTRAHEREFGLSADDKDNKPIWMQAEEREEKGKFKDNAPYGDYGGWHKAAKVDSRSRSSPTVTTTLKNLGALYRRQGKYDAAEILEECAMKSRRNALDMVRETKVRELLGQDLSTDVPRSEAMAKERHHRRSSGTPRHGSTESVSYEKTDGSEEVSIGVAWKAKRKAKDRSRSIPAGYVEIPRSPPHVLVENGDGKLRRSGSLSKLRASVRRSSTKLLNKLKGRESDDDGGMKRASSMSVLPSRGNDESTPAPIQLSQRGRVGSHDNLSSRRQSGNF.

Disordered regions lie at residues 1–23 (MSGS…SQEQ) and 158–204 (KYDE…SVSA). A coiled-coil region spans residues 20 to 160 (SQEQIITGTR…EYMNSIKKYD (141 aa)). TPR repeat units follow at residues 215-248 (LRTL…LEKT), 257-290 (ATML…REKT), 299-332 (AATL…REKV), 341-374 (AKQL…YEKK), 383-416 (AKTK…AHER), and 472-505 (TTTL…RRNA). Disordered stretches follow at residues 520–558 (QDLS…YEKT) and 586–686 (GYVE…SGNF). A compositionally biased stretch (polar residues) spans 675–686 (DNLSSRRQSGNF).

Belongs to the kinesin light chain family. Oligomeric complex composed of two heavy chains and two light chains. Phosphorylation may modulate the process of mechanochemical coupling.

Its subcellular location is the cytoplasm. The protein resides in the cytoskeleton. Kinesin is a microtubule-associated force-producing protein that may play a role in organelle transport. The light chain may function in coupling of cargo to the heavy chain or in the modulation of its ATPase activity. The chain is Kinesin light chain from Strongylocentrotus purpuratus (Purple sea urchin).